Consider the following 432-residue polypeptide: Golgin subfamily A member 6-like protein 9 (432 aa).

Residues 1 to 11 show a composition bias toward pro residues; it reads MWPQPRLPPHP. Disordered regions lie at residues 1-77 and 349-411; these read MWPQ…YGEG and KELE…AGGA. Over residues 51 to 62 the composition is skewed to polar residues; the sequence is NGSSPDTFTSGG. Positions 157–354 form a coiled coil; that stretch reads SKMEQLQDET…EQQVKELEKS (198 aa). Basic and acidic residues predominate over residues 349 to 362; sequence KELEKSGGAEEPRG. Residues 366 to 381 show a composition bias toward low complexity; that stretch reads AAAARPVAGAPVPQGA.

Belongs to the GOLGA6 family.

The polypeptide is Golgin subfamily A member 6-like protein 9 (Homo sapiens (Human)).